The following is a 191-amino-acid chain: MLGMIKNSLFGSVETWPWQVLSKGSKGDVFYEERACEGGKFATVEVTDKPVDEALREAMPKVMKYVGGSNDKGLGMGMTVPISFAVFPSDDGDLQKKLKVWFRIPNKFQSDPPAPSDDSIKIEDREGITVYSTQFGGYAKAADYAAQAAQLRSALESTAKYQTDFYFCTGYDPPMKPYGRRNEVWLVKSSE.

The protein belongs to the HEBP family. As to quaternary structure, monomer.

Its subcellular location is the cytoplasm. In terms of biological role, may bind free porphyrinogens that may be present in the cell and thus facilitate removal of these potentially toxic compound. Binds with a high affinity to one molecule of heme or porphyrins. It binds metalloporphyrins, free porphyrins and N-methylprotoporphyrin with similar affinities. This chain is Heme-binding protein 1 (HEBP1), found in Bos taurus (Bovine).